A 408-amino-acid polypeptide reads, in one-letter code: Formate-dependent phosphoribosylglycinamide formyltransferase (408 aa).

N(1)-(5-phospho-beta-D-ribosyl)glycinamide-binding positions include 25-26 (EL) and E85. ATP contacts are provided by residues R118, K159, 164–169 (SSGKGQ), 199–202 (EAFV), and E207. The 196-residue stretch at 123-318 (KLAAEELGLP…EFELHAKAIL (196 aa)) folds into the ATP-grasp domain. Positions 277 and 289 each coordinate Mg(2+). Residues D296, K365, and 372 to 373 (RR) contribute to the N(1)-(5-phospho-beta-D-ribosyl)glycinamide site.

The protein belongs to the PurK/PurT family. Homodimer.

It catalyses the reaction N(1)-(5-phospho-beta-D-ribosyl)glycinamide + formate + ATP = N(2)-formyl-N(1)-(5-phospho-beta-D-ribosyl)glycinamide + ADP + phosphate + H(+). The protein operates within purine metabolism; IMP biosynthesis via de novo pathway; N(2)-formyl-N(1)-(5-phospho-D-ribosyl)glycinamide from N(1)-(5-phospho-D-ribosyl)glycinamide (formate route): step 1/1. Its function is as follows. Involved in the de novo purine biosynthesis. Catalyzes the transfer of formate to 5-phospho-ribosyl-glycinamide (GAR), producing 5-phospho-ribosyl-N-formylglycinamide (FGAR). Formate is provided by PurU via hydrolysis of 10-formyl-tetrahydrofolate. This Corynebacterium glutamicum (strain R) protein is Formate-dependent phosphoribosylglycinamide formyltransferase.